A 210-amino-acid polypeptide reads, in one-letter code: Somatotropin-1 (210 aa).

The first 22 residues, 1–22, serve as a signal peptide directing secretion; the sequence is MGQVFLLMPVLLASCFLSQGAA. Zn(2+) is bound at residue histidine 38. A disulfide bond links cysteine 71 and cysteine 183. Glutamate 192 is a Zn(2+) binding site. Cysteines 200 and 208 form a disulfide.

The protein belongs to the somatotropin/prolactin family.

The protein localises to the secreted. In terms of biological role, growth hormone plays an important role in growth control and is involved in the regulation of several anabolic processes. Implicated as an osmoregulatory substance important for seawater adaptation. In Oncorhynchus nerka (Sockeye salmon), this protein is Somatotropin-1 (gh1).